The following is a 375-amino-acid chain: Secreted LysM effector Vd4LysM (375 aa).

An N-terminal signal peptide occupies residues 1–24; the sequence is MPSVTISSTMLAGLLLMLVPASSA. The LysM 1 domain maps to 57-104; it reads SWWWDNEGQIPCANMPAEWGITMQDFLRWNPSITSSCGNFLNGRSYCV. A disordered region spans residues 108 to 139; sequence GEEPPVPGTPTTTTAPATTTKPSNGITTPQPI. Residues 116-129 are compositionally biased toward low complexity; it reads TPTTTTAPATTTKP. In terms of domain architecture, LysM 2 spans 149–195; it reads KFHYISEGDRCQDILSYQKITLADFFKWNPAVKSDCSGLWSKTNACV. Residues 206–217 are compositionally biased toward low complexity; that stretch reads TTTTKPATPTTP. The segment at 206 to 225 is disordered; the sequence is TTTTKPATPTTPSNGITTPQ. The 47-residue stretch at 237 to 283 folds into the LysM 3 domain; the sequence is KFHYISEGDRCQDILSYQKITQADFFKWNPAVKSDCSGLWSKTHACV. Positions 287–317 are disordered; that stretch reads GGQAPPPTPTTTKPTTTKPPGNGVTTPTPTQ. The span at 296–317 shows a compositional bias: low complexity; the sequence is TTTKPTTTKPPGNGVTTPTPTQ. The LysM 4 domain maps to 326 to 372; the sequence is KFHFVSPGNTCQQIVSYQKITMANFVKWNSGAGSGCNNLWGNTHACV.

It belongs to the secreted LysM effector family.

In terms of biological role, might have a role in sequestration of chitin oligosaccharides (breakdown products of fungal cell walls that are released during invasion and act as triggers of host immunity) to dampen host defense. Does not play an important role during host colonization. This is Secreted LysM effector Vd4LysM from Verticillium dahliae (strain VdLs.17 / ATCC MYA-4575 / FGSC 10137) (Verticillium wilt).